A 292-amino-acid chain; its full sequence is Phosphotriesterase homology protein (292 aa).

Zn(2+) is bound by residues His12, His14, and Glu125. Beta-D-glucose is bound at residue 148–149 (HN). Position 158 (His158) interacts with Zn(2+). 3 residues coordinate beta-D-glucose: Gly176, Asp178, and Arg181. Zn(2+) contacts are provided by His186 and Asp243. Residues Asp280 and Arg284 each contribute to the beta-D-glucose site.

This sequence belongs to the metallo-dependent hydrolases superfamily. Phosphotriesterase family. As to quaternary structure, monomer. The cofactor is Zn(2+).

Activity is higher in the enzyme containing Mn(2+) than that containing Zn(2+). In terms of biological role, catalyzes the hydrolysis of phosphorylated glyceryl acetates in which the presence of a phosphate group is required for the enzymatic hydrolysis. Hydrolyzes a dibutyl glycerol derivative suggesting it acts on phosphoglycerol substrates with a butyrate leaving group. Also active with aromatic acetates and propionates. No activity with various sugar phosphates, with various nitrophenylphosphate or nitrophenylphosphonate derivatives, or with phosphorylated or non-phosphorylated sugar lactones tested. Does not hydrolyze non-phosphorylated carboxyesters with long chain leaving groups. No general esterase, aminopeptidase, sulfatase, phosphatase, carbonic anhydrase, phosphodiesterase, and phosphotriesterase activities detected when tested with the following non-specific substrates: p-nitrophenyl acetate, L-alanine nitroanilide, p-nitrophenyl sulfate, bis(p-nitrophenyl) phosphate, paraoxon, and p-nitrophenyl phosphate. In Escherichia coli (strain K12), this protein is Phosphotriesterase homology protein.